The sequence spans 316 residues: MIGRHKHCISLAEYSREEILEVLDLAVSMKEVLQRPIKKVPSLRGKSVVNLFFEASTRTRSSFEIAAKVLSADALNWTASASSVTKGETLVDTARNLEAMRPDVLVIRHSAGGAPRLVAEHVGCSVVSAGDGAHEHPSQGLLDCFTLREKLGTLEGKTIAIVGDISHSRVARSDLHAMTKLGARVRLCGPPTMIPAGIEALGATVRTQLREAVEGADAVVMLRIQHERIGDPLIPGTREYSKLWGLNAKKAAEWLRPECVILHPGPINRGVELSPEVADGPQSVILDQVQNGVAVRMAILYLLAGGNPADAGEAKA.

Carbamoyl phosphate is bound by residues arginine 58 and threonine 59. Lysine 86 contributes to the L-aspartate binding site. Residues arginine 108, histidine 136, and glutamine 139 each coordinate carbamoyl phosphate. Arginine 169 and arginine 223 together coordinate L-aspartate. Positions 265 and 266 each coordinate carbamoyl phosphate.

This sequence belongs to the aspartate/ornithine carbamoyltransferase superfamily. ATCase family. As to quaternary structure, heterododecamer (2C3:3R2) of six catalytic PyrB chains organized as two trimers (C3), and six regulatory PyrI chains organized as three dimers (R2).

It catalyses the reaction carbamoyl phosphate + L-aspartate = N-carbamoyl-L-aspartate + phosphate + H(+). It participates in pyrimidine metabolism; UMP biosynthesis via de novo pathway; (S)-dihydroorotate from bicarbonate: step 2/3. In terms of biological role, catalyzes the condensation of carbamoyl phosphate and aspartate to form carbamoyl aspartate and inorganic phosphate, the committed step in the de novo pyrimidine nucleotide biosynthesis pathway. In Anaeromyxobacter sp. (strain Fw109-5), this protein is Aspartate carbamoyltransferase catalytic subunit.